The sequence spans 89 residues: Phosphocarrier protein HPr (89 aa).

An HPr domain is found at 1 to 88 (MLEHELTVTN…ELFENRFNED (88 aa)). Residue histidine 15 is the Pros-phosphohistidine intermediate of the active site. Serine 46 is subject to Phosphoserine; by HPrK/P.

It belongs to the HPr family.

Its subcellular location is the cytoplasm. Phosphorylation on Ser-46 inhibits the phosphoryl transfer from enzyme I to HPr. Its function is as follows. General (non sugar-specific) component of the phosphoenolpyruvate-dependent sugar phosphotransferase system (sugar PTS). This major carbohydrate active-transport system catalyzes the phosphorylation of incoming sugar substrates concomitantly with their translocation across the cell membrane. The phosphoryl group from phosphoenolpyruvate (PEP) is transferred to the phosphoryl carrier protein HPr by enzyme I. Phospho-HPr then transfers it to the PTS EIIA domain. The sequence is that of Phosphocarrier protein HPr (ptsH) from Xylella fastidiosa (strain Temecula1 / ATCC 700964).